The chain runs to 67 residues: ATP synthase F(0) complex subunit 8 (67 aa).

The helical transmembrane segment at 8–24 (TWFTTILSTSFSIIHRL) threads the bilayer. K54 carries the post-translational modification N6-acetyllysine; alternate. K54 bears the N6-succinyllysine; alternate mark. Position 57 is an N6-acetyllysine (K57).

It belongs to the ATPase protein 8 family. In terms of assembly, component of the ATP synthase complex composed at least of ATP5F1A/subunit alpha, ATP5F1B/subunit beta, ATP5MC1/subunit c (homooctomer), MT-ATP6/subunit a, MT-ATP8/subunit 8, ATP5ME/subunit e, ATP5MF/subunit f, ATP5MG/subunit g, ATP5MK/subunit k, ATP5MJ/subunit j, ATP5F1C/subunit gamma, ATP5F1D/subunit delta, ATP5F1E/subunit epsilon, ATP5PF/subunit F6, ATP5PB/subunit b, ATP5PD/subunit d, ATP5PO/subunit OSCP. ATP synthase complex consists of a soluble F(1) head domain (subunits alpha(3) and beta(3)) - the catalytic core - and a membrane F(0) domain - the membrane proton channel (subunits c, a, 8, e, f, g, k and j). These two domains are linked by a central stalk (subunits gamma, delta, and epsilon) rotating inside the F1 region and a stationary peripheral stalk (subunits F6, b, d, and OSCP). Interacts with PRICKLE3.

It is found in the mitochondrion membrane. In terms of biological role, subunit 8, of the mitochondrial membrane ATP synthase complex (F(1)F(0) ATP synthase or Complex V) that produces ATP from ADP in the presence of a proton gradient across the membrane which is generated by electron transport complexes of the respiratory chain. ATP synthase complex consist of a soluble F(1) head domain - the catalytic core - and a membrane F(1) domain - the membrane proton channel. These two domains are linked by a central stalk rotating inside the F(1) region and a stationary peripheral stalk. During catalysis, ATP synthesis in the catalytic domain of F(1) is coupled via a rotary mechanism of the central stalk subunits to proton translocation. In vivo, can only synthesize ATP although its ATP hydrolase activity can be activated artificially in vitro. Part of the complex F(0) domain. The protein is ATP synthase F(0) complex subunit 8 of Glis glis (Fat dormouse).